Consider the following 274-residue polypeptide: Dermonecrotic toxin SdSicTox-betaIIB2ii (274 aa).

Residue His5 is part of the active site. Mg(2+) is bound by residues Glu25 and Asp27. The Nucleophile role is filled by His41. 2 cysteine pairs are disulfide-bonded: Cys45-Cys51 and Cys47-Cys190. A Mg(2+)-binding site is contributed by Asp85.

Belongs to the arthropod phospholipase D family. Class II subfamily. Requires Mg(2+) as cofactor. Expressed by the venom gland.

The protein resides in the secreted. The enzyme catalyses an N-(acyl)-sphingosylphosphocholine = an N-(acyl)-sphingosyl-1,3-cyclic phosphate + choline. It carries out the reaction an N-(acyl)-sphingosylphosphoethanolamine = an N-(acyl)-sphingosyl-1,3-cyclic phosphate + ethanolamine. The catalysed reaction is a 1-acyl-sn-glycero-3-phosphocholine = a 1-acyl-sn-glycero-2,3-cyclic phosphate + choline. It catalyses the reaction a 1-acyl-sn-glycero-3-phosphoethanolamine = a 1-acyl-sn-glycero-2,3-cyclic phosphate + ethanolamine. Its function is as follows. Dermonecrotic toxins cleave the phosphodiester linkage between the phosphate and headgroup of certain phospholipids (sphingolipid and lysolipid substrates), forming an alcohol (often choline) and a cyclic phosphate. This toxin acts on sphingomyelin (SM). It may also act on ceramide phosphoethanolamine (CPE), lysophosphatidylcholine (LPC) and lysophosphatidylethanolamine (LPE), but not on lysophosphatidylserine (LPS), and lysophosphatidylglycerol (LPG). It acts by transphosphatidylation, releasing exclusively cyclic phosphate products as second products. Induces dermonecrosis, hemolysis, increased vascular permeability, edema, inflammatory response, and platelet aggregation. The protein is Dermonecrotic toxin SdSicTox-betaIIB2ii of Sicarius cf. damarensis (strain GJB-2008) (Six-eyed sand spider).